A 228-amino-acid chain; its full sequence is Deoxyribose-phosphate aldolase (228 aa).

Aspartate 93 functions as the Proton donor/acceptor in the catalytic mechanism. Lysine 159 serves as the catalytic Schiff-base intermediate with acetaldehyde. The active-site Proton donor/acceptor is the lysine 188.

It belongs to the DeoC/FbaB aldolase family. DeoC type 1 subfamily.

It is found in the cytoplasm. The enzyme catalyses 2-deoxy-D-ribose 5-phosphate = D-glyceraldehyde 3-phosphate + acetaldehyde. It participates in carbohydrate degradation; 2-deoxy-D-ribose 1-phosphate degradation; D-glyceraldehyde 3-phosphate and acetaldehyde from 2-deoxy-alpha-D-ribose 1-phosphate: step 2/2. Catalyzes a reversible aldol reaction between acetaldehyde and D-glyceraldehyde 3-phosphate to generate 2-deoxy-D-ribose 5-phosphate. In Carboxydothermus hydrogenoformans (strain ATCC BAA-161 / DSM 6008 / Z-2901), this protein is Deoxyribose-phosphate aldolase.